A 391-amino-acid chain; its full sequence is Large ribosomal subunit protein uL3 (391 aa).

Residues 1-10 (MSHRKFEAPR) show a composition bias toward basic and acidic residues. The interval 1–41 (MSHRKFEAPRHGSLGFRPRRRTRHHRGRCRSFPKDDPSKKP) is disordered. A compositionally biased stretch (basic residues) spans 17–31 (RPRRRTRHHRGRCRS).

Belongs to the universal ribosomal protein uL3 family.

The protein resides in the cytoplasm. In terms of biological role, the L3 protein is a component of the large subunit of cytoplasmic ribosomes. This chain is Large ribosomal subunit protein uL3 (RPL3), found in Tetrahymena thermophila.